Here is a 418-residue protein sequence, read N- to C-terminus: Serine protease inhibitor A3N (418 aa).

The N-terminal stretch at 1-29 is a signal peptide; the sequence is MTRLVTLELLMAGIGSALLCFPDCILGED. Residue serine 93 is modified to Phosphoserine. N-linked (GlcNAc...) asparagine glycosylation is found at asparagine 104, asparagine 258, and asparagine 269. The segment at 367–394 is RCL; that stretch reads GTEAAAATGVKFVPMSAKLDPLIIAFDR.

The protein belongs to the serpin family. Post-translationally, N-glycosylated. Liver.

It localises to the secreted. In Rattus norvegicus (Rat), this protein is Serine protease inhibitor A3N (Serpina3n).